We begin with the raw amino-acid sequence, 359 residues long: DNA-directed RNA polymerase RPB3-11 homolog (359 aa).

The protein in the N-terminal section; belongs to the archaeal RpoD/eukaryotic RPB3 RNA polymerase subunit family. In the C-terminal section; belongs to the archaeal RpoL/eukaryotic RPB11/RPC19 RNA polymerase subunit family. Part of the viral DNA-directed RNA polymerase that consists of 8 polII-like subunits (RPB1, RPB2, RPB3, RPB5, RPB6, RPB7, RPB9, RPB10), a capping enzyme and a termination factor.

The protein resides in the host cytoplasm. It localises to the virion. Component of the DNA-directed RNA polymerase (RNAP) that catalyzes the transcription in the cytoplasm of viral DNA into RNA using the four ribonucleoside triphosphates as substrates. The chain is DNA-directed RNA polymerase RPB3-11 homolog from Ornithodoros (relapsing fever ticks).